A 399-amino-acid chain; its full sequence is Keratin, type I cytoskeletal 19 (399 aa).

A head region spans residues Met1–Asn78. Omega-N-methylarginine is present on Arg7. Phosphoserine occurs at positions 14 and 22. Residue Arg24 is modified to Asymmetric dimethylarginine; alternate. Arg24 is modified (omega-N-methylarginine; alternate). Omega-N-methylarginine is present on Arg32. A phosphoserine mark is found at Ser35 and Ser40. Omega-N-methylarginine occurs at positions 43 and 51. 2 positions are modified to phosphoserine: Ser57 and Ser71. The tract at residues Glu79–Trp114 is coil 1A. The 312-residue stretch at Glu79–Phe390 folds into the IF rod domain. The segment at Tyr115–Thr132 is linker 1. Residues Ile133–Leu224 form a coil 1B region. A linker 12 region spans residues Lys225 to Ile247. Residues Asp243 to Tyr389 form a necessary for interaction with PNN region. Positions Leu248–Gln386 are coil 2. Position 322 is a phosphothreonine (Thr322). The interval Asp387–Leu399 is rod-like helical tail. Ser394 carries the post-translational modification Phosphoserine.

It belongs to the intermediate filament family. As to quaternary structure, heterotetramer of two type I and two type II keratins. Interacts with PNN and the actin-binding domain of DMD.

Involved in the organization of myofibers. Together with KRT8, helps to link the contractile apparatus to dystrophin at the costameres of striated muscle. The sequence is that of Keratin, type I cytoskeletal 19 (KRT19) from Bos taurus (Bovine).